A 287-amino-acid polypeptide reads, in one-letter code: Vesicle-associated protein 4-3 (287 aa).

Positions 1–14 (MALTEDKSDSDGRR) are enriched in basic and acidic residues. The interval 1-45 (MALTEDKSDSDGRRWGKFKLPFRNSNSQAPSASSSSSMATSSSSV) is disordered. Positions 25–45 (SNSQAPSASSSSSMATSSSSV) are enriched in low complexity. The MSP domain occupies 99 to 221 (RLKLDPSAKL…EEQVMRVVFL (123 aa)).

This sequence belongs to the VAMP-associated protein (VAP) (TC 9.B.17) family.

Functionally, may play a role in vesicle trafficking. The sequence is that of Vesicle-associated protein 4-3 (PVA43) from Arabidopsis thaliana (Mouse-ear cress).